Here is a 697-residue protein sequence, read N- to C-terminus: MFS antiporter QDR3 (697 aa).

Topologically, residues 1–141 (MSHSPNLSPQ…ARDYPNKIKY (141 aa)) are cytoplasmic. Positions 38–109 (HPIGHHGREQ…KPTSTSIKTN (72 aa)) are disordered. Composition is skewed to low complexity over residues 53 to 69 (NTTKTTTTTTNKIHTTT) and 85 to 99 (DLSSLESQQEQYLSQ). Residues 142-162 (LIVFIIAFASLAGPFGTSVML) traverse the membrane as a helical segment. The Extracellular segment spans residues 163 to 180 (PAIDDIVNDLNTNVSTVN). N-linked (GlcNAc...) asparagine glycans are attached at residues asparagine 175 and asparagine 180. The helical transmembrane segment at 181 to 201 (VSVGIYLLSLGIFPLWWSSFS) threads the bilayer. Topologically, residues 202–215 (ERFGRRSVYMVSFT) are cytoplasmic. Residues 216–236 (LFVAFSIGTALSPNIAALIVL) form a helical membrane-spanning segment. The Extracellular portion of the chain corresponds to 237–240 (RVLQ). A helical transmembrane segment spans residues 241 to 261 (GGSSASVQAVGAGTIADLFIP). The Cytoplasmic segment spans residues 262-268 (QERGQAM). Residues 269 to 289 (GLYYLGPLAGPFLAPILGGAV) form a helical membrane-spanning segment. Topologically, residues 290 to 296 (SQAWGWR) are extracellular. Residues 297 to 317 (ATQWLLMIISACSFVLITFFL) traverse the membrane as a helical segment. The Cytoplasmic segment spans residues 318-485 (PETLRRVDTI…SIILLKHPPV (168 aa)). The interval 338–367 (DNNGSQNEKIHDDFAGADNSSVHDIDGNPI) is disordered. Residues 486 to 506 (VLVISFSAISFAAIYFFNMAI) traverse the membrane as a helical segment. The Extracellular segment spans residues 507 to 519 (SYEYARSPYNFSS). A glycan (N-linked (GlcNAc...) asparagine) is linked at asparagine 516. Residues 520-540 (VILGLMYIPNSVTYFMASIIG) traverse the membrane as a helical segment. Residues 541–565 (GKWNDRLLNRYAQKHGELVPESRLS) are Cytoplasmic-facing. The chain crosses the membrane as a helical span at residues 566 to 586 (WNIVVAIILYPMACLIFGWTI). Over 587–590 (KYRE) the chain is Extracellular. The helical transmembrane segment at 591–611 (FWVIPLIGTALFGFASMLVIG) threads the bilayer. Over 612–626 (ATVTYLVDSLPGKGA) the chain is Cytoplasmic. A helical transmembrane segment spans residues 627-647 (TGVALNNLIRQILAAIATFIV). Residues 648 to 653 (EPLLRA) are Extracellular-facing. Residues 654–674 (IGAGVLFSIIAGILLVSSLVL) traverse the membrane as a helical segment. The Cytoplasmic segment spans residues 675 to 697 (LYLKKRGAFFREHYDVMDLYAKL).

It belongs to the major facilitator superfamily. CAR1 family.

Its subcellular location is the cell membrane. Functionally, MFS antiporter that does not display functional linkage as drug transporter and performs functions that significantly affect biofilm development and virulence. No substrate for transport has been identified yet, but plays an important role in the growth in the host. In Candida albicans (strain SC5314 / ATCC MYA-2876) (Yeast), this protein is MFS antiporter QDR3 (QDR3).